Reading from the N-terminus, the 86-residue chain is Small ribosomal subunit protein uS17 (86 aa).

Belongs to the universal ribosomal protein uS17 family. Part of the 30S ribosomal subunit.

Functionally, one of the primary rRNA binding proteins, it binds specifically to the 5'-end of 16S ribosomal RNA. The chain is Small ribosomal subunit protein uS17 from Streptococcus pyogenes serotype M3 (strain ATCC BAA-595 / MGAS315).